A 533-amino-acid polypeptide reads, in one-letter code: Probable G-protein coupled receptor Mth-like 14 (533 aa).

The signal sequence occupies residues 1-23 (MNLGHWNFLLALISLQTFFNASA). N-linked (GlcNAc...) asparagine glycans are attached at residues asparagine 20, asparagine 29, asparagine 30, asparagine 36, and asparagine 47. Residues 24–242 (QISTVNNSSK…QVEEQIAFAK (219 aa)) lie on the Extracellular side of the membrane. The disordered stretch occupies residues 86–108 (VQSPVDNPLDPADCSQREKYRKQ). Cysteines 120 and 216 form a disulfide. N-linked (GlcNAc...) asparagine glycosylation is found at asparagine 133, asparagine 178, and asparagine 206. A helical transmembrane segment spans residues 243–263 (VVFVAVLMLISMPCLLLVSYL). Residues 264 to 279 (HMTLRLLRNLHGLSLS) lie on the Cytoplasmic side of the membrane. Residues 280-300 (LMSLCLASGYFVHSVVHIYGI) form a helical membrane-spanning segment. Topologically, residues 301–303 (PNQ) are extracellular. Residues 304–324 (GFIGYVIQFCILSYFFWYLCI) form a helical membrane-spanning segment. Topologically, residues 325-347 (CFNVLLNVWYKLPCCIQCSKSWA) are cytoplasmic. Residues 348–368 (TFNFACYAVFAFSGPATIVAL) form a helical membrane-spanning segment. The Extracellular segment spans residues 369–395 (TVQKGLPGMPSYFLQGLTESIRDSQRY). A helical membrane pass occupies residues 396–416 (FIPPVSTILFLSFLLNIISFF). The Cytoplasmic portion of the chain corresponds to 417–451 (GFQRISGYAKAEKNIQERKCLFDQQKYEDVKKDAK). Residues 452–472 (CVSLLGIIMVVSWLLEIITFY) traverse the membrane as a helical segment. Residues 473 to 480 (SGSNSNYL) lie on the Extracellular side of the membrane. A helical transmembrane segment spans residues 481–501 (ILCDMVNGLQGVWVLLIFLVV). The Cytoplasmic segment spans residues 502-533 (RRRRTIILRWWYDRGSHEIEGTELQALSNSPT).

This sequence belongs to the G-protein coupled receptor 2 family. Mth subfamily.

The protein localises to the cell membrane. The polypeptide is Probable G-protein coupled receptor Mth-like 14 (mthl14) (Drosophila melanogaster (Fruit fly)).